The following is a 179-amino-acid chain: Cell division protein SepF (179 aa).

Residues 19-55 are disordered; that stretch reads DSSLPYEKRDEPVFTSVNSSQEPALPMNQPSQSAGAK. Residues 33–55 are compositionally biased toward polar residues; that stretch reads TSVNSSQEPALPMNQPSQSAGAK.

It belongs to the SepF family. In terms of assembly, homodimer. Interacts with FtsZ.

The protein resides in the cytoplasm. Its function is as follows. Cell division protein that is part of the divisome complex and is recruited early to the Z-ring. Probably stimulates Z-ring formation, perhaps through the cross-linking of FtsZ protofilaments. Its function overlaps with FtsA. In Streptococcus pneumoniae (strain JJA), this protein is Cell division protein SepF.